A 312-amino-acid chain; its full sequence is Isethionate sulfite-lyase activating enzyme (312 aa).

Positions 22–309 (HDGPGIRTIV…VDETRGAVTE (288 aa)) constitute a Radical SAM core domain. [4Fe-4S] cluster is bound by residues cysteine 36, cysteine 40, cysteine 43, cysteine 62, cysteine 65, cysteine 68, cysteine 72, cysteine 92, cysteine 95, cysteine 100, and cysteine 104. 42-44 (WCS) is an S-adenosyl-L-methionine binding site. 4Fe-4S ferredoxin-type domains follow at residues 53–82 (PQVAYNKGRCIGCHRCIKACEHDAITVNED) and 83–115 (GTLSLDRGKCDVCKTLDCAHACPAQGMIIYGEN). S-adenosyl-L-methionine-binding positions include glycine 144, 193 to 195 (DVK), and histidine 267.

Belongs to the organic radical-activating enzymes family. In terms of assembly, monomer. Requires [4Fe-4S] cluster as cofactor.

It carries out the reaction glycyl-[protein] + reduced [flavodoxin] + S-adenosyl-L-methionine = glycin-2-yl radical-[protein] + semiquinone [flavodoxin] + 5'-deoxyadenosine + L-methionine + H(+). It participates in organosulfur degradation; alkanesulfonate degradation. In terms of biological role, involved in an anaerobic respiration pathway that converts the sulfonate taurine (2-aminoethanesulfonate) to ammonia, acetate and sulfide. Catalyzes activation of the isethionate sulfite-lyase IslA under anaerobic conditions by generation of an organic free radical on a glycine residue, via a homolytic cleavage of S-adenosyl-L-methionine (SAM). This Bilophila wadsworthia (strain 3_1_6) protein is Isethionate sulfite-lyase activating enzyme.